We begin with the raw amino-acid sequence, 119 residues long: Large ribosomal subunit protein uL18 (119 aa).

The interval Met-1–Ala-26 is disordered. A compositionally biased stretch (basic residues) spans Arg-9–Thr-19.

It belongs to the universal ribosomal protein uL18 family. As to quaternary structure, part of the 50S ribosomal subunit; part of the 5S rRNA/L5/L18/L25 subcomplex. Contacts the 5S and 23S rRNAs.

In terms of biological role, this is one of the proteins that bind and probably mediate the attachment of the 5S RNA into the large ribosomal subunit, where it forms part of the central protuberance. The polypeptide is Large ribosomal subunit protein uL18 (Prosthecochloris aestuarii (strain DSM 271 / SK 413)).